The sequence spans 263 residues: Lens fiber major intrinsic protein (263 aa).

The Cytoplasmic segment spans residues 1–9; that stretch reads MWELRSASF. The chain crosses the membrane as a helical span at residues 10-29; that stretch reads WRAIFAEFFATLFYVFFGLG. At 30–41 the chain is on the extracellular side; sequence ASLRWAPGPLHV. A helical transmembrane segment spans residues 42–59; that stretch reads LQVALAFGLALATLVQTV. Over 60-61 the chain is Cytoplasmic; that stretch reads GH. Residues 62–77 constitute an intramembrane region (discontinuously helical); the sequence is ISGAHVNPAVTFAFLV. Residues 68-70 carry the NPA 1 motif; sequence NPA. Topologically, residues 78-82 are cytoplasmic; sequence GSQMS. A helical transmembrane segment spans residues 83 to 106; it reads LLRAFCYIAAQLLGAVAGAAVLYS. At 107 to 127 the chain is on the extracellular side; it reads VTPPAVRGNLALNTLHAGVSV. The helical transmembrane segment at 128–148 threads the bilayer; sequence GQATTVEIFLTLQFVLCIFAT. Residues 149–156 are Cytoplasmic-facing; sequence YDERRNGR. A helical membrane pass occupies residues 157 to 175; it reads MGSVALAVGFSLTLGHLFG. The Extracellular portion of the chain corresponds to 176 to 178; sequence MYY. The segment at residues 179–193 is an intramembrane region (discontinuously helical); it reads TGAGMNPARSFAPAI. Residues 184–186 carry the NPA 2 motif; sequence NPA. Over 194-200 the chain is Extracellular; that stretch reads LTRNFSN. A helical membrane pass occupies residues 201–222; that stretch reads HWVYWVGPIIGGGLGSLLYDFL. Over 223–263 the chain is Cytoplasmic; that stretch reads LFPRLKSVSERLSILKGARPSDSNGQPEGTGEPVELKTQAL. The interval 227-237 is interaction with CALM; sequence LKSVSERLSIL. Phosphoserine occurs at positions 235, 243, and 245. Residues 240–263 form a disordered region; it reads ARPSDSNGQPEGTGEPVELKTQAL. A Deamidated asparagine modification is found at Asn246.

This sequence belongs to the MIP/aquaporin (TC 1.A.8) family. Homotetramer; each monomer provides an independent water pore. Two homotetramers on opposing membranes can dimerize, forming a cell-cell junction. Interacts with CALM; the calcium-calmodulin/CALM complex interacts with the cytoplasmic domains of two aquaporins, leading to channel closure. Interacts with BFSP1 (via C-terminus); prevents calcium-dependent inhibition of the water channel activity. Subject to partial proteolytic cleavage in the eye lens core. Partial proteolysis promotes interactions between tetramers from adjoining membranes. In terms of processing, fatty acylated at Met-1 and Lys-238. The acyl modifications, in decreasing order of ion abundance, are: oleoyl (C18:1) &gt; palmitoyl (C16:0) &gt; stearoyl (C18:0) &gt; eicosenoyl (C20:1) &gt; dihomo-gamma-linolenoyl (C20:3) &gt; palmitoleoyl (C16:1) &gt; eicosadienoyl (C20:2).

It is found in the cell membrane. The protein localises to the cell junction. It carries out the reaction H2O(in) = H2O(out). With respect to regulation, the water channel activity is inhibited by calcium through calmodulin/CALM. In terms of biological role, aquaporins form homotetrameric transmembrane channels, with each monomer independently mediating water transport across the plasma membrane along its osmotic gradient. Specifically expressed in lens fiber cells, this aquaporin is crucial for maintaining lens water homeostasis and transparency. Beyond water permeability, it also acts as a cell-to-cell adhesion molecule, forming thin junctions between lens fiber cells that are essential for maintaining the ordered structure and transparency of the lens. This is Lens fiber major intrinsic protein from Mus musculus (Mouse).